A 500-amino-acid chain; its full sequence is Hexokinase-3 (500 aa).

The helical transmembrane segment at 4-24 (VGLGVAVGCAAVTCAIAAALV) threads the bilayer. One can recognise a Hexokinase domain in the interval 35 to 487 (RRAVALLREF…SGVGAALLAA (453 aa)). Residues 90 to 222 (SGSEEGVYYS…GLNVRVTALV (133 aa)) form a hexokinase small subdomain region. Residues Gly104, Thr105, and Asn106 each coordinate ADP. Residues Thr188, Lys189, Asn223, and Asp224 each coordinate D-glucose. The segment at 223–476 (NDTVGTLALG…RNVTLRVTED (254 aa)) is hexokinase large subdomain. Ser247 lines the ADP pocket. Positions 250, 278, and 309 each coordinate D-glucose. An ADP-binding site is contributed by Gly441.

It belongs to the hexokinase family. As to expression, expressed in roots, leaves, flowers, immature seeds and seed coat. Expressed in young shoots, tiller buds, endosperm seven days after fertilization, and interconnecting tissues such as pulvini and nodes.

It localises to the mitochondrion outer membrane. The catalysed reaction is a D-hexose + ATP = a D-hexose 6-phosphate + ADP + H(+). The enzyme catalyses D-fructose + ATP = D-fructose 6-phosphate + ADP + H(+). It catalyses the reaction D-glucose + ATP = D-glucose 6-phosphate + ADP + H(+). Its pathway is carbohydrate metabolism; hexose metabolism. It participates in carbohydrate degradation; glycolysis; D-glyceraldehyde 3-phosphate and glycerone phosphate from D-glucose: step 1/4. Fructose and glucose phosphorylating enzyme. Involved in the regulation of cell expansion in spikelet hulls, grain size, and gibberellin biosynthesis and homeostasis. The polypeptide is Hexokinase-3 (Oryza sativa subsp. japonica (Rice)).